The sequence spans 386 residues: Succinyl-diaminopimelate desuccinylase (386 aa).

His-77 is a Zn(2+) binding site. Asp-79 is an active-site residue. Zn(2+) is bound at residue Asp-110. Glu-144 (proton acceptor) is an active-site residue. 3 residues coordinate Zn(2+): Glu-145, Glu-173, and His-359.

Belongs to the peptidase M20A family. DapE subfamily. In terms of assembly, homodimer. The cofactor is Zn(2+). Requires Co(2+) as cofactor.

It carries out the reaction N-succinyl-(2S,6S)-2,6-diaminopimelate + H2O = (2S,6S)-2,6-diaminopimelate + succinate. Its pathway is amino-acid biosynthesis; L-lysine biosynthesis via DAP pathway; LL-2,6-diaminopimelate from (S)-tetrahydrodipicolinate (succinylase route): step 3/3. In terms of biological role, catalyzes the hydrolysis of N-succinyl-L,L-diaminopimelic acid (SDAP), forming succinate and LL-2,6-diaminopimelate (DAP), an intermediate involved in the bacterial biosynthesis of lysine and meso-diaminopimelic acid, an essential component of bacterial cell walls. This is Succinyl-diaminopimelate desuccinylase from Methylibium petroleiphilum (strain ATCC BAA-1232 / LMG 22953 / PM1).